The following is a 231-amino-acid chain: MDARQMKIKAAQAALGYVESGMRLGIGTGSTAEEFVRLLAEKVASGFQIQGVPTSERTARLCLELGVPLKSLDELPELDLTIDGADEVDGKLRLIKGGGGALLREKIVASASERMIVIADESKVVDVLGAFKLPIEVNQFGLTTTRLAIEKVAARLGLTGDIGLRASGDGPFMTDGGHLILDASFGRIPDAEALAAGLNAIPGVVEHGLFLGMASLAIIAGPEGARTLTAG.

Substrate is bound by residues 28-31 (TGST), 83-86 (DGAD), and 96-99 (KGGG). Residue Glu105 is the Proton acceptor of the active site. Position 123 (Lys123) interacts with substrate.

It belongs to the ribose 5-phosphate isomerase family. In terms of assembly, homodimer.

The catalysed reaction is aldehydo-D-ribose 5-phosphate = D-ribulose 5-phosphate. It participates in carbohydrate degradation; pentose phosphate pathway; D-ribose 5-phosphate from D-ribulose 5-phosphate (non-oxidative stage): step 1/1. Its function is as follows. Catalyzes the reversible conversion of ribose-5-phosphate to ribulose 5-phosphate. This is Ribose-5-phosphate isomerase A from Sinorhizobium fredii (strain NBRC 101917 / NGR234).